Consider the following 465-residue polypeptide: Na(+)-translocating NADH-quinone reductase subunit A (465 aa).

The protein belongs to the NqrA family. In terms of assembly, composed of six subunits; NqrA, NqrB, NqrC, NqrD, NqrE and NqrF.

It catalyses the reaction a ubiquinone + n Na(+)(in) + NADH + H(+) = a ubiquinol + n Na(+)(out) + NAD(+). NQR complex catalyzes the reduction of ubiquinone-1 to ubiquinol by two successive reactions, coupled with the transport of Na(+) ions from the cytoplasm to the periplasm. NqrA to NqrE are probably involved in the second step, the conversion of ubisemiquinone to ubiquinol. This Chlamydia muridarum (strain MoPn / Nigg) protein is Na(+)-translocating NADH-quinone reductase subunit A.